The following is a 132-amino-acid chain: Small ribosomal subunit protein uS8c (132 aa).

Belongs to the universal ribosomal protein uS8 family. As to quaternary structure, part of the 30S ribosomal subunit.

The protein resides in the plastid. Its subcellular location is the chloroplast. Functionally, one of the primary rRNA binding proteins, it binds directly to 16S rRNA central domain where it helps coordinate assembly of the platform of the 30S subunit. In Guillardia theta (Cryptophyte), this protein is Small ribosomal subunit protein uS8c (rps8).